A 381-amino-acid polypeptide reads, in one-letter code: Creatine kinase M-type (381 aa).

The Phosphagen kinase N-terminal domain maps to 11–98; the sequence is KLNYSAAEEF…FDPVIEDRHG (88 aa). The region spanning 125-367 is the Phosphagen kinase C-terminal domain; it reads YVLSSRVRTG…KLMVEMEKRL (243 aa). ATP contacts are provided by residues 128-132, H191, R236, R292, 320-325, and D335; these read SSRVR and RGTGGV.

The protein belongs to the ATP:guanido phosphotransferase family. In terms of assembly, dimer of identical or non-identical chains. With MM being the major form in skeletal muscle and myocardium, MB existing in myocardium, and BB existing in many tissues, especially brain.

The protein localises to the cytoplasm. The enzyme catalyses creatine + ATP = N-phosphocreatine + ADP + H(+). Reversibly catalyzes the transfer of phosphate between ATP and various phosphogens (e.g. creatine phosphate). Creatine kinase isoenzymes play a central role in energy transduction in tissues with large, fluctuating energy demands, such as skeletal muscle, heart, brain and spermatozoa. The polypeptide is Creatine kinase M-type (Tetronarce californica (Pacific electric ray)).